The sequence spans 70 residues: Large ribosomal subunit protein bL31 (70 aa).

Cys-16, Cys-18, Cys-37, and Cys-40 together coordinate Zn(2+).

The protein belongs to the bacterial ribosomal protein bL31 family. Type A subfamily. Part of the 50S ribosomal subunit. The cofactor is Zn(2+).

Binds the 23S rRNA. The sequence is that of Large ribosomal subunit protein bL31 from Alteromonas mediterranea (strain DSM 17117 / CIP 110805 / LMG 28347 / Deep ecotype).